We begin with the raw amino-acid sequence, 238 residues long: DNA repair protein RecO (238 aa).

Belongs to the RecO family.

In terms of biological role, involved in DNA repair and RecF pathway recombination. The chain is DNA repair protein RecO from Hahella chejuensis (strain KCTC 2396).